The primary structure comprises 344 residues: Lysophosphatidic acid receptor 6 (344 aa).

At 1-19 (MVSVNSSHCFYNDSFKYTL) the chain is on the extracellular side. An N-linked (GlcNAc...) asparagine glycan is attached at Asn5. A helical transmembrane segment spans residues 20–46 (YGCMFSMVFVLGLISNCVAIYIFICVL). Over 47–55 (KVRNETTTY) the chain is Cytoplasmic. Residues 56–79 (MINLAMSDLLFVFTLPFRIFYFTT) form a helical membrane-spanning segment. The Extracellular portion of the chain corresponds to 80–92 (RNWPFGDLLCKIS). A disulfide bridge connects residues Cys89 and Cys168. Residues 93 to 112 (VMLFYTNMYGSILFLTCISV) form a helical membrane-spanning segment. The Cytoplasmic portion of the chain corresponds to 113–133 (DRFLAIVYPFKSKTLRTKRNA). Residues 134-154 (KIVCTGVWLTVIGGSAPAVFV) traverse the membrane as a helical segment. Residues 155–181 (QSTHSQGNNASEACFENFPEATWKTYL) lie on the Extracellular side of the membrane. The helical transmembrane segment at 182–209 (SRIVIFIEIVGFFIPLILNVTCSSMVLK) threads the bilayer. Residues 210–227 (TLTKPVTLSRSKINKTKV) are Cytoplasmic-facing. A helical transmembrane segment spans residues 228–253 (LKMIFVHLIIFCFCFVPYNINLILYS). Residues 254–272 (LVRTQTFVNCSVVAAVRTM) are Extracellular-facing. A helical membrane pass occupies residues 273 to 292 (YPITLCIAVSNCCFDPIVYY). Residue Cys284 is the site of S-palmitoyl cysteine attachment. At 293–344 (FTSDTIQNSIKMKNWSVRRSDFRFSEVHGAENFIQHNLQTLKSKIFDNESAA) the chain is on the cytoplasmic side.

The protein belongs to the G-protein coupled receptor 1 family. As to expression, expressed ubiquitously, including in skin and hair follicle cells. Detected in both Henle's and Huxley's layers of the inner root sheath of the hair follicle and in suprabasal layers of the epidermis (at protein level). Expressed at low levels in peripheral blood leukocytes.

Its subcellular location is the cell membrane. In terms of biological role, binds to oleoyl-L-alpha-lysophosphatidic acid (LPA). Intracellular cAMP is involved in the receptor activation. Important for the maintenance of hair growth and texture. The sequence is that of Lysophosphatidic acid receptor 6 (LPAR6) from Homo sapiens (Human).